The following is a 519-amino-acid chain: Molybdate transporter 1 (519 aa).

The next 7 helical transmembrane spans lie at leucine 98–isoleucine 118, leucine 164–leucine 184, alanine 370–cysteine 390, isoleucine 412–leucine 432, phenylalanine 436–valine 456, glycine 464–glycine 484, and phenylalanine 485–alanine 505.

This sequence belongs to the SLC26A/SulP transporter (TC 2.A.53) family.

The protein localises to the membrane. With respect to regulation, 60% inhibition by 20 uM tungstate or by lack of glucose in the medium, but no inhibition by sulfate. Its function is as follows. High affinity molybdate transporter. Acts through an energy-dependent process. The chain is Molybdate transporter 1 (MOT1) from Chlamydomonas reinhardtii (Chlamydomonas smithii).